The chain runs to 174 residues: Crossover junction endodeoxyribonuclease RuvC (174 aa).

Residues Asp-8, Glu-67, and Asp-139 contribute to the active site. Residues Asp-8, Glu-67, and Asp-139 each coordinate Mg(2+).

Belongs to the RuvC family. Homodimer which binds Holliday junction (HJ) DNA. The HJ becomes 2-fold symmetrical on binding to RuvC with unstacked arms; it has a different conformation from HJ DNA in complex with RuvA. In the full resolvosome a probable DNA-RuvA(4)-RuvB(12)-RuvC(2) complex forms which resolves the HJ. Mg(2+) serves as cofactor.

The protein resides in the cytoplasm. It catalyses the reaction Endonucleolytic cleavage at a junction such as a reciprocal single-stranded crossover between two homologous DNA duplexes (Holliday junction).. The RuvA-RuvB-RuvC complex processes Holliday junction (HJ) DNA during genetic recombination and DNA repair. Endonuclease that resolves HJ intermediates. Cleaves cruciform DNA by making single-stranded nicks across the HJ at symmetrical positions within the homologous arms, yielding a 5'-phosphate and a 3'-hydroxyl group; requires a central core of homology in the junction. The consensus cleavage sequence is 5'-(A/T)TT(C/G)-3'. Cleavage occurs on the 3'-side of the TT dinucleotide at the point of strand exchange. HJ branch migration catalyzed by RuvA-RuvB allows RuvC to scan DNA until it finds its consensus sequence, where it cleaves and resolves the cruciform DNA. The polypeptide is Crossover junction endodeoxyribonuclease RuvC (Pseudomonas entomophila (strain L48)).